Consider the following 322-residue polypeptide: Lymphatic vessel endothelial hyaluronic acid receptor 1 (322 aa).

Positions 1–19 are cleaved as a signal peptide; sequence MARCFSLVLLLTSIWTTRL. Residues 20–238 lie on the Extracellular side of the membrane; sequence LVQGSLRAEE…EAAGFGGVPT (219 aa). The Link domain maps to 40-130; sequence GITLVSKKAN…SRQFAAYCYN (91 aa). Asparagine 53 carries N-linked (GlcNAc...) asparagine glycosylation. 2 disulfides stabilise this stretch: cysteine 61-cysteine 128 and cysteine 85-cysteine 106. N-linked (GlcNAc...) asparagine glycosylation occurs at asparagine 130. The helical transmembrane segment at 239 to 259 threads the bilayer; that stretch reads ALLVLALLFFGAAAGLGFCYV. The Cytoplasmic segment spans residues 260-322; the sequence is KRYVKAFPFT…TTVRCLEAEV (63 aa). Over residues 279-309 the composition is skewed to basic and acidic residues; that stretch reads ETKVVKEEKANDSNPNEESKKTDKNPEESKS. The segment at 279–322 is disordered; that stretch reads ETKVVKEEKANDSNPNEESKKTDKNPEESKSPSKTTVRCLEAEV.

Homodimer; disulfide-linked. Interacts with PDGFB and IGFBP3. Forms a transient ternary complex with PDGFB and PDGFRB in TGN. Post-translationally, O-glycosylated. In terms of tissue distribution, mainly expressed in endothelial cells lining lymphatic vessels.

Its subcellular location is the cell membrane. In terms of biological role, ligand-specific transporter trafficking between intracellular organelles (TGN) and the plasma membrane. Plays a role in autocrine regulation of cell growth mediated by growth regulators containing cell surface retention sequence binding (CRS). May act as a hyaluronan (HA) transporter, either mediating its uptake for catabolism within lymphatic endothelial cells themselves, or its transport into the lumen of afferent lymphatic vessels for subsequent re-uptake and degradation in lymph nodes. Binds to pericelluar hyaluronan matrices deposited on the surface of leukocytes and facilitates cell adhesion and migration through lymphatic endothelium. In Homo sapiens (Human), this protein is Lymphatic vessel endothelial hyaluronic acid receptor 1 (LYVE1).